The primary structure comprises 216 residues: Somatotropin (216 aa).

Residues methionine 1–alanine 26 form the signal peptide. Histidine 45 is a Zn(2+) binding site. An intrachain disulfide couples cysteine 78 to cysteine 189. Serine 131 carries the phosphoserine modification. Zn(2+) is bound at residue glutamate 198. Residues cysteine 206 and cysteine 214 are joined by a disulfide bond.

Belongs to the somatotropin/prolactin family.

The protein localises to the secreted. Functionally, plays an important role in growth control. Its major role in stimulating body growth is to stimulate the liver and other tissues to secrete IGF1. It stimulates both the differentiation and proliferation of myoblasts. It also stimulates amino acid uptake and protein synthesis in muscle and other tissues. In Camelus dromedarius (Dromedary), this protein is Somatotropin (GH1).